Consider the following 191-residue polypeptide: Peptidyl-tRNA hydrolase (191 aa).

Tyr14 lines the tRNA pocket. His19 serves as the catalytic Proton acceptor. Residues Tyr64, Asn66, and Asn112 each coordinate tRNA.

This sequence belongs to the PTH family. In terms of assembly, monomer.

It localises to the cytoplasm. The catalysed reaction is an N-acyl-L-alpha-aminoacyl-tRNA + H2O = an N-acyl-L-amino acid + a tRNA + H(+). Hydrolyzes ribosome-free peptidyl-tRNAs (with 1 or more amino acids incorporated), which drop off the ribosome during protein synthesis, or as a result of ribosome stalling. In terms of biological role, catalyzes the release of premature peptidyl moieties from peptidyl-tRNA molecules trapped in stalled 50S ribosomal subunits, and thus maintains levels of free tRNAs and 50S ribosomes. The sequence is that of Peptidyl-tRNA hydrolase from Lachnoclostridium phytofermentans (strain ATCC 700394 / DSM 18823 / ISDg) (Clostridium phytofermentans).